Here is a 96-residue protein sequence, read N- to C-terminus: UPF0235 protein Spro_4033 (96 aa).

The protein belongs to the UPF0235 family.

The polypeptide is UPF0235 protein Spro_4033 (Serratia proteamaculans (strain 568)).